Consider the following 347-residue polypeptide: GMP reductase (347 aa).

108–131 lines the NADP(+) pocket; the sequence is ADFEKTKQILDLNPALNFVCIDVA. G181 and G183 together coordinate K(+). Residue C186 is the Thioimidate intermediate of the active site. Position 216–239 (216–239) interacts with NADP(+); the sequence is IVSDGGCTTPGDVAKAFGGGADFV.

It belongs to the IMPDH/GMPR family. GuaC type 1 subfamily. Homotetramer.

The enzyme catalyses IMP + NH4(+) + NADP(+) = GMP + NADPH + 2 H(+). Catalyzes the irreversible NADPH-dependent deamination of GMP to IMP. It functions in the conversion of nucleobase, nucleoside and nucleotide derivatives of G to A nucleotides, and in maintaining the intracellular balance of A and G nucleotides. This is GMP reductase from Shigella flexneri.